The chain runs to 122 residues: Biogenesis of lysosome-related organelles complex 1 subunit CNL1 (122 aa).

Residues Met-1 to Glu-10 show a composition bias toward basic and acidic residues. Residues Met-1 to Ile-21 are disordered. Residues Glu-63–Ile-95 are a coiled coil.

The protein belongs to the BLOC1S4 family. In terms of assembly, component of the biogenesis of lysosome-related organelles complex-1 (BLOC-1) composed of at least BLI1, BLS1, CNL1, KXD1, SNN1 and VAB2.

The protein resides in the cytoplasm. Functionally, component of the biogenesis of lysosome-related organelles complex-1 (BLOC-1), a complex that is involved in endosomal cargo sorting. The protein is Biogenesis of lysosome-related organelles complex 1 subunit CNL1 (CNL1) of Saccharomyces cerevisiae (strain ATCC 204508 / S288c) (Baker's yeast).